A 944-amino-acid chain; its full sequence is Protein translocase subunit SecA (944 aa).

Residues Q90, G108 to T112, and D509 contribute to the ATP site. The disordered stretch occupies residues V533–S565.

This sequence belongs to the SecA family. Monomer and homodimer. Part of the essential Sec protein translocation apparatus which comprises SecA, SecYEG and auxiliary proteins SecDF. Other proteins may also be involved.

The protein resides in the cell inner membrane. Its subcellular location is the cellular thylakoid membrane. It is found in the cytoplasm. It catalyses the reaction ATP + H2O + cellular proteinSide 1 = ADP + phosphate + cellular proteinSide 2.. Part of the Sec protein translocase complex. Interacts with the SecYEG preprotein conducting channel. Has a central role in coupling the hydrolysis of ATP to the transfer of proteins into and across the cell membrane, serving as an ATP-driven molecular motor driving the stepwise translocation of polypeptide chains across the membrane. Functionally, probably participates in protein translocation into and across both the cytoplasmic and thylakoid membranes in cyanobacterial cells. The sequence is that of Protein translocase subunit SecA from Prochlorococcus marinus (strain NATL1A).